Here is a 473-residue protein sequence, read N- to C-terminus: 3-isopropylmalate dehydratase large subunit (473 aa).

Residues Cys354, Cys414, and Cys417 each contribute to the [4Fe-4S] cluster site.

This sequence belongs to the aconitase/IPM isomerase family. LeuC type 1 subfamily. Heterodimer of LeuC and LeuD. [4Fe-4S] cluster is required as a cofactor.

The enzyme catalyses (2R,3S)-3-isopropylmalate = (2S)-2-isopropylmalate. It participates in amino-acid biosynthesis; L-leucine biosynthesis; L-leucine from 3-methyl-2-oxobutanoate: step 2/4. Functionally, catalyzes the isomerization between 2-isopropylmalate and 3-isopropylmalate, via the formation of 2-isopropylmaleate. This chain is 3-isopropylmalate dehydratase large subunit, found in Mycobacterium marinum (strain ATCC BAA-535 / M).